The sequence spans 135 residues: Nucleoside diphosphate kinase (135 aa).

6 residues coordinate ATP: K9, Y57, R85, T91, R102, and N112. The active-site Pros-phosphohistidine intermediate is the H115.

This sequence belongs to the NDK family. In terms of assembly, homotetramer. Requires Mg(2+) as cofactor.

It localises to the cytoplasm. It catalyses the reaction a 2'-deoxyribonucleoside 5'-diphosphate + ATP = a 2'-deoxyribonucleoside 5'-triphosphate + ADP. The catalysed reaction is a ribonucleoside 5'-diphosphate + ATP = a ribonucleoside 5'-triphosphate + ADP. In terms of biological role, major role in the synthesis of nucleoside triphosphates other than ATP. The ATP gamma phosphate is transferred to the NDP beta phosphate via a ping-pong mechanism, using a phosphorylated active-site intermediate. The sequence is that of Nucleoside diphosphate kinase from Thermoanaerobacter pseudethanolicus (strain ATCC 33223 / 39E) (Clostridium thermohydrosulfuricum).